Here is a 598-residue protein sequence, read N- to C-terminus: Arginine--tRNA ligase (598 aa).

A 'HIGH' region motif is present at residues Ala-131–His-141. The disordered stretch occupies residues Lys-288 to Gly-309.

Belongs to the class-I aminoacyl-tRNA synthetase family. Monomer.

The protein localises to the cytoplasm. The catalysed reaction is tRNA(Arg) + L-arginine + ATP = L-arginyl-tRNA(Arg) + AMP + diphosphate. This is Arginine--tRNA ligase from Anaeromyxobacter dehalogenans (strain 2CP-C).